The primary structure comprises 619 residues: Guanylate cyclase soluble subunit beta-1 (619 aa).

Residue His105 participates in heme binding. Residues 421–554 form the Guanylate cyclase domain; that stretch reads TILFSGIVGF…NTVNLTSRTE (134 aa).

It belongs to the adenylyl cyclase class-4/guanylyl cyclase family. The active enzyme is formed by a heterodimer of an alpha and a beta subunit. Heterodimer with GUCY1A1. Can also form inactive homodimers in vitro. The cofactor is heme. In terms of tissue distribution, detected in brain cortex and cerebellum (at protein level).

It is found in the cytoplasm. It catalyses the reaction GTP = 3',5'-cyclic GMP + diphosphate. Activated by nitric oxide in the presence of magnesium or manganese ions. Functionally, mediates responses to nitric oxide (NO) by catalyzing the biosynthesis of the signaling molecule cGMP. The chain is Guanylate cyclase soluble subunit beta-1 from Homo sapiens (Human).